Consider the following 270-residue polypeptide: 4-hydroxy-tetrahydrodipicolinate reductase (270 aa).

Residues 11–16 (GCNGRM) and E37 contribute to the NAD(+) site. R38 contributes to the NADP(+) binding site. Residues 101–103 (GTT) and 125–128 (ASNY) contribute to the NAD(+) site. Residue H158 is the Proton donor/acceptor of the active site. Position 159 (H159) interacts with (S)-2,3,4,5-tetrahydrodipicolinate. Residue K162 is the Proton donor of the active site. Residue 168–169 (GT) coordinates (S)-2,3,4,5-tetrahydrodipicolinate.

This sequence belongs to the DapB family.

The protein resides in the cytoplasm. The enzyme catalyses (S)-2,3,4,5-tetrahydrodipicolinate + NAD(+) + H2O = (2S,4S)-4-hydroxy-2,3,4,5-tetrahydrodipicolinate + NADH + H(+). It catalyses the reaction (S)-2,3,4,5-tetrahydrodipicolinate + NADP(+) + H2O = (2S,4S)-4-hydroxy-2,3,4,5-tetrahydrodipicolinate + NADPH + H(+). The protein operates within amino-acid biosynthesis; L-lysine biosynthesis via DAP pathway; (S)-tetrahydrodipicolinate from L-aspartate: step 4/4. Catalyzes the conversion of 4-hydroxy-tetrahydrodipicolinate (HTPA) to tetrahydrodipicolinate. The sequence is that of 4-hydroxy-tetrahydrodipicolinate reductase from Aeromonas salmonicida (strain A449).